A 673-amino-acid polypeptide reads, in one-letter code: UvrABC system protein B (673 aa).

The Helicase ATP-binding domain occupies 26–183; it reads ANFEAGLAKQ…RHLTDLQYTR (158 aa). ATP is bound at residue 39-46; sequence GVTGSGKT. The Beta-hairpin motif lies at 92–115; the sequence is YYDYYQPEAYVPSSDTFIEKDSSI. One can recognise a Helicase C-terminal domain in the interval 431-597; it reads QVDDLMSEIH…SVERPISDIM (167 aa). The segment at 601–631 is disordered; it reads REDAAEKKSGKGRSKSRQVAEETPDYRAMKP. Over residues 618-630 the composition is skewed to basic and acidic residues; sequence QVAEETPDYRAMK. Positions 635-670 constitute a UVR domain; sequence AGKLKSLEQKMYQHAKDLEFEAAAQIRDQIQKLKTA.

It belongs to the UvrB family. In terms of assembly, forms a heterotetramer with UvrA during the search for lesions. Interacts with UvrC in an incision complex.

The protein localises to the cytoplasm. Its function is as follows. The UvrABC repair system catalyzes the recognition and processing of DNA lesions. A damage recognition complex composed of 2 UvrA and 2 UvrB subunits scans DNA for abnormalities. Upon binding of the UvrA(2)B(2) complex to a putative damaged site, the DNA wraps around one UvrB monomer. DNA wrap is dependent on ATP binding by UvrB and probably causes local melting of the DNA helix, facilitating insertion of UvrB beta-hairpin between the DNA strands. Then UvrB probes one DNA strand for the presence of a lesion. If a lesion is found the UvrA subunits dissociate and the UvrB-DNA preincision complex is formed. This complex is subsequently bound by UvrC and the second UvrB is released. If no lesion is found, the DNA wraps around the other UvrB subunit that will check the other stand for damage. The chain is UvrABC system protein B from Xanthomonas oryzae pv. oryzae (strain PXO99A).